A 308-amino-acid polypeptide reads, in one-letter code: Transcription factor JunB (308 aa).

The segment at 229 to 256 (RIKAERKRLRNRLAATKCRKRKLERISR) is basic motif. The bZIP domain maps to 229–292 (RIKAERKRLR…AQLKQKVLRH (64 aa)). The segment at 257–285 (LEEKVKVLKNDNAGLSNTASVLRDQVAQL) is leucine-zipper.

It belongs to the bZIP family. Jun subfamily. In terms of assembly, binds DNA as a homodimer or as a heterodimer with another member of the jun/fos family.

The protein localises to the nucleus. In terms of biological role, transcription factor involved in regulating gene activity following the primary growth factor response. Binds to the DNA sequence 5'-TGA[CG]TCA-3'. This chain is Transcription factor JunB (junb), found in Cyprinus carpio (Common carp).